Consider the following 121-residue polypeptide: Large ribosomal subunit protein bL12 (121 aa).

Belongs to the bacterial ribosomal protein bL12 family. As to quaternary structure, homodimer. Part of the ribosomal stalk of the 50S ribosomal subunit. Forms a multimeric L10(L12)X complex, where L10 forms an elongated spine to which 2 to 4 L12 dimers bind in a sequential fashion. Binds GTP-bound translation factors.

Functionally, forms part of the ribosomal stalk which helps the ribosome interact with GTP-bound translation factors. Is thus essential for accurate translation. This Pediococcus pentosaceus (strain ATCC 25745 / CCUG 21536 / LMG 10740 / 183-1w) protein is Large ribosomal subunit protein bL12.